Reading from the N-terminus, the 366-residue chain is Chorismate synthase (366 aa).

NADP(+) contacts are provided by arginine 48 and arginine 54. FMN is bound by residues 125-127 (RSS), 238-239 (NA), glycine 278, 293-297 (KPTSS), and arginine 319.

The protein belongs to the chorismate synthase family. Homotetramer. It depends on FMNH2 as a cofactor.

The enzyme catalyses 5-O-(1-carboxyvinyl)-3-phosphoshikimate = chorismate + phosphate. It participates in metabolic intermediate biosynthesis; chorismate biosynthesis; chorismate from D-erythrose 4-phosphate and phosphoenolpyruvate: step 7/7. In terms of biological role, catalyzes the anti-1,4-elimination of the C-3 phosphate and the C-6 proR hydrogen from 5-enolpyruvylshikimate-3-phosphate (EPSP) to yield chorismate, which is the branch point compound that serves as the starting substrate for the three terminal pathways of aromatic amino acid biosynthesis. This reaction introduces a second double bond into the aromatic ring system. In Laribacter hongkongensis (strain HLHK9), this protein is Chorismate synthase.